Reading from the N-terminus, the 631-residue chain is Leukocyte immunoglobulin-like receptor subfamily B member 3 (631 aa).

The signal sequence occupies residues 1-23 (MTPALTALLCLGLSLGPRTRVQA). Residues 24–443 (GPFPKPTLWA…STPGLGRYLE (420 aa)) are Extracellular-facing. Ig-like C2-type domains follow at residues 42 to 100 (GSPV…RCHY), 111 to 229 (DPLE…SLLT), 225 to 314 (PSLL…DPLN), and 338 to 419 (GENV…LVVS). A disulfide bridge links cysteine 49 with cysteine 98. Residues 59-70 (RLHKEGSPEPLD) are compositionally biased toward basic and acidic residues. Residues 59–78 (RLHKEGSPEPLDRNNPLEPK) are disordered. An N-linked (GlcNAc...) asparagine glycan is attached at asparagine 139. Intrachain disulfides connect cysteine 144-cysteine 196 and cysteine 245-cysteine 296. N-linked (GlcNAc...) asparagine glycosylation is found at asparagine 280, asparagine 301, and asparagine 340. Cysteine 345 and cysteine 396 are oxidised to a cystine. The helical transmembrane segment at 444–464 (VLIGVSVAFVLLLFLLLFLLL) threads the bilayer. Residues 465–631 (RRQRHSKHRT…PSIYATLAIH (167 aa)) are Cytoplasmic-facing. The tract at residues 470-631 (SKHRTSDQRK…PSIYATLAIH (162 aa)) is disordered. The segment covering 473–482 (RTSDQRKTDF) has biased composition (basic and acidic residues). The short motif at 512–517 (NLYAAV) is the ITIM motif 1 element. Composition is skewed to basic and acidic residues over residues 520-537 (TQSE…HDED) and 567-581 (LDTK…RQMD). Residues 588 to 600 (EASQDVTYAQLHS) show a composition bias toward polar residues. 2 short sequence motifs (ITIM motif) span residues 593 to 598 (VTYAQL) and 623 to 628 (SIYATL). 2 positions are modified to phosphotyrosine; by LYN: tyrosine 595 and tyrosine 625.

Interacts with LYN, PTPN6/SHP-1 and PTPN11/SHP-2. Post-translationally, phosphorylated on tyrosine residues by LYN. Phosphorylation at Tyr-595 and Tyr-625 is important for interaction with PTPN6/SHP-1 and PTPN11/SHP-2. As to expression, detected in monocytes and B-cells.

It is found in the cell membrane. Functionally, may act as receptor for class I MHC antigens. Becomes activated upon coligation of LILRB3 and immune receptors, such as FCGR2B and the B-cell receptor. Down-regulates antigen-induced B-cell activation by recruiting phosphatases to its immunoreceptor tyrosine-based inhibitor motifs (ITIM). The chain is Leukocyte immunoglobulin-like receptor subfamily B member 3 (LILRB3) from Homo sapiens (Human).